The primary structure comprises 257 residues: 4-hydroxy-tetrahydrodipicolinate reductase (257 aa).

NAD(+)-binding positions include Gly-8 to Val-13, Ala-90 to Thr-92, and Ala-114 to Met-117. The active-site Proton donor/acceptor is the His-146. His-147 contacts (S)-2,3,4,5-tetrahydrodipicolinate. Lys-150 functions as the Proton donor in the catalytic mechanism. Gly-156–Thr-157 is a binding site for (S)-2,3,4,5-tetrahydrodipicolinate.

The protein belongs to the DapB family.

Its subcellular location is the cytoplasm. The catalysed reaction is (S)-2,3,4,5-tetrahydrodipicolinate + NAD(+) + H2O = (2S,4S)-4-hydroxy-2,3,4,5-tetrahydrodipicolinate + NADH + H(+). It carries out the reaction (S)-2,3,4,5-tetrahydrodipicolinate + NADP(+) + H2O = (2S,4S)-4-hydroxy-2,3,4,5-tetrahydrodipicolinate + NADPH + H(+). The protein operates within amino-acid biosynthesis; L-lysine biosynthesis via DAP pathway; (S)-tetrahydrodipicolinate from L-aspartate: step 4/4. Its function is as follows. Catalyzes the conversion of 4-hydroxy-tetrahydrodipicolinate (HTPA) to tetrahydrodipicolinate. The chain is 4-hydroxy-tetrahydrodipicolinate reductase from Aliarcobacter butzleri (strain RM4018) (Arcobacter butzleri).